The sequence spans 371 residues: 4-hydroxy-3-methylbut-2-en-1-yl diphosphate synthase (flavodoxin) (371 aa).

4 residues coordinate [4Fe-4S] cluster: Cys-270, Cys-273, Cys-305, and Glu-312.

The protein belongs to the IspG family. It depends on [4Fe-4S] cluster as a cofactor.

The enzyme catalyses (2E)-4-hydroxy-3-methylbut-2-enyl diphosphate + oxidized [flavodoxin] + H2O + 2 H(+) = 2-C-methyl-D-erythritol 2,4-cyclic diphosphate + reduced [flavodoxin]. It functions in the pathway isoprenoid biosynthesis; isopentenyl diphosphate biosynthesis via DXP pathway; isopentenyl diphosphate from 1-deoxy-D-xylulose 5-phosphate: step 5/6. Functionally, converts 2C-methyl-D-erythritol 2,4-cyclodiphosphate (ME-2,4cPP) into 1-hydroxy-2-methyl-2-(E)-butenyl 4-diphosphate. In Shewanella denitrificans (strain OS217 / ATCC BAA-1090 / DSM 15013), this protein is 4-hydroxy-3-methylbut-2-en-1-yl diphosphate synthase (flavodoxin).